Consider the following 495-residue polypeptide: Amidophosphoribosyltransferase (495 aa).

The tract at residues 1–22 (MFPPSSDLTELNDGQPLSGHHA) is disordered. A propeptide spanning residues 1-28 (MFPPSSDLTELNDGQPLSGHHADKPEEA) is cleaved from the precursor. C29 functions as the Nucleophile in the catalytic mechanism. Residues 29–254 (CGVFGIYAPE…AGELVHITES (226 aa)) form the Glutamine amidotransferase type-2 domain. Residue C270 coordinates [4Fe-4S] cluster. S317, D379, and D380 together coordinate Mg(2+). The [4Fe-4S] cluster site is built by C416, C467, and C470.

This sequence in the C-terminal section; belongs to the purine/pyrimidine phosphoribosyltransferase family. The cofactor is Mg(2+). Requires [4Fe-4S] cluster as cofactor.

It catalyses the reaction 5-phospho-beta-D-ribosylamine + L-glutamate + diphosphate = 5-phospho-alpha-D-ribose 1-diphosphate + L-glutamine + H2O. It functions in the pathway purine metabolism; IMP biosynthesis via de novo pathway; N(1)-(5-phospho-D-ribosyl)glycinamide from 5-phospho-alpha-D-ribose 1-diphosphate: step 1/2. Functionally, catalyzes the formation of phosphoribosylamine from phosphoribosylpyrophosphate (PRPP) and glutamine. In Synechocystis sp. (strain ATCC 27184 / PCC 6803 / Kazusa), this protein is Amidophosphoribosyltransferase.